A 125-amino-acid polypeptide reads, in one-letter code: SOSS complex subunit C homolog A (125 aa).

Over residues 1-16 (MAFPNTSAQQAETNSK) the composition is skewed to polar residues. Disordered regions lie at residues 1 to 20 (MAFP…SLEE), 38 to 74 (SNTN…AAFN), and 105 to 125 (PATP…NNPK).

This sequence belongs to the SOSS-C family.

The sequence is that of SOSS complex subunit C homolog A from Drosophila willistoni (Fruit fly).